Here is a 65-residue protein sequence, read N- to C-terminus: Large ribosomal subunit protein bL35 (65 aa).

Residues 1–15 show a composition bias toward basic residues; the sequence is MPKLKTRKAAAKRFR. The tract at residues 1–28 is disordered; it reads MPKLKTRKAAAKRFRQTGTGKFTRRKAN.

The protein belongs to the bacterial ribosomal protein bL35 family.

This is Large ribosomal subunit protein bL35 from Cyanothece sp. (strain PCC 7425 / ATCC 29141).